The chain runs to 392 residues: Outer membrane protein assembly factor BamB (392 aa).

Positions 1-19 (MQLRKLLLPGLLSVTLLSG) are cleaved as a signal peptide. The N-palmitoyl cysteine moiety is linked to residue Cys-20. Cys-20 carries S-diacylglycerol cysteine lipidation.

It belongs to the BamB family. Part of the Bam complex, which is composed of the outer membrane protein BamA, and four lipoproteins BamB, BamC, BamD and BamE.

Its subcellular location is the cell outer membrane. Functionally, part of the outer membrane protein assembly complex, which is involved in assembly and insertion of beta-barrel proteins into the outer membrane. This Salmonella typhimurium (strain LT2 / SGSC1412 / ATCC 700720) protein is Outer membrane protein assembly factor BamB.